We begin with the raw amino-acid sequence, 49 residues long: Omega-segestritoxin-Sf1a (49 aa).

Disulfide bonds link C3/C22, C10/C27, C21/C48, and C29/C46.

Expressed by the venom gland.

It localises to the secreted. Functionally, potent and selective blocker of N-type voltage-gated calcium channels (Cav2.2/CACNA1B). Also blocks vertebrate Cav2.1/CACNA1A (P/Q-type) and Cav1.2/CACNA1C (L-type) channels at very high concentration (2 micromolar). This is Omega-segestritoxin-Sf1a from Segestria florentina (Tube-web spider).